The chain runs to 135 residues: Small ribosomal subunit protein bS16 (135 aa).

A disordered region spans residues Arg-82–Gly-135. Residues Ala-94–Glu-121 are compositionally biased toward basic and acidic residues. Over residues Glu-123–Gly-135 the composition is skewed to acidic residues.

The protein belongs to the bacterial ribosomal protein bS16 family.

The chain is Small ribosomal subunit protein bS16 from Synechococcus sp. (strain CC9605).